A 467-amino-acid chain; its full sequence is MELGKTQRVHIVGIGGAGMSAIAELLLKSGFSVSGSDLSTGDVTDRLTAHGAVIYKGHQEGQVADSDVVVYSSAIRSEENVELRAALKAGIPVIKRDEMLGELMRYKSGICISGTHGKTTTTAMIATMLLEAGESPTVMIGGISDYLKGSTVVGEGKYMVIEADEYDRAFLKLTPTIAILNSLESEHMDTYGTLEELKQAFITFANKVPFYGRVICCVDWAEIRKIIPSLNRRYITFGIEEPADVMATDIVLLEGSTTFTIRAFGIEYPNVRIHVPGKHNVLNALAAFSTGLELGISPERLIAGLGCYSGMRRRFQVKYSGNNGLMVVDDYAHHPSEVKATVKAAKDGWQHSKVVAVFQPHLFSRTRDFADEYGWALSRADEVYIADIYPAREKAADHPGVTGELVANAVRKAGGKQVHFVNGMEELYTALQTHVAPQTLLLCMGAGDITHLATKVAVFCKEHNADH.

Residue 114-120 (GTHGKTT) coordinates ATP.

It belongs to the MurCDEF family.

The protein resides in the cytoplasm. The enzyme catalyses UDP-N-acetyl-alpha-D-muramate + L-alanine + ATP = UDP-N-acetyl-alpha-D-muramoyl-L-alanine + ADP + phosphate + H(+). It functions in the pathway cell wall biogenesis; peptidoglycan biosynthesis. Functionally, cell wall formation. The chain is UDP-N-acetylmuramate--L-alanine ligase from Chlorobium chlorochromatii (strain CaD3).